A 670-amino-acid polypeptide reads, in one-letter code: DNA ligase (670 aa).

NAD(+) is bound by residues 32 to 36 (DAEYD), 81 to 82 (SL), and glutamate 111. Lysine 113 serves as the catalytic N6-AMP-lysine intermediate. Positions 134, 171, 290, and 314 each coordinate NAD(+). 4 residues coordinate Zn(2+): cysteine 408, cysteine 411, cysteine 426, and cysteine 432. In terms of domain architecture, BRCT spans 591–670 (EEALSLKGQT…DGLLAVLAGE (80 aa)).

This sequence belongs to the NAD-dependent DNA ligase family. LigA subfamily. Mg(2+) is required as a cofactor. Mn(2+) serves as cofactor.

It catalyses the reaction NAD(+) + (deoxyribonucleotide)n-3'-hydroxyl + 5'-phospho-(deoxyribonucleotide)m = (deoxyribonucleotide)n+m + AMP + beta-nicotinamide D-nucleotide.. In terms of biological role, DNA ligase that catalyzes the formation of phosphodiester linkages between 5'-phosphoryl and 3'-hydroxyl groups in double-stranded DNA using NAD as a coenzyme and as the energy source for the reaction. It is essential for DNA replication and repair of damaged DNA. The chain is DNA ligase from Shewanella sediminis (strain HAW-EB3).